Reading from the N-terminus, the 174-residue chain is Small ribosomal subunit protein uS5c (174 aa).

In terms of domain architecture, S5 DRBM spans 17–80 (WEERVVQVKR…TDAKKHLVTV (64 aa)).

This sequence belongs to the universal ribosomal protein uS5 family. In terms of assembly, part of the 30S ribosomal subunit. Contacts protein S4.

The protein localises to the plastid. It is found in the chloroplast. In terms of biological role, with S4 and S12 plays an important role in translational accuracy. The chain is Small ribosomal subunit protein uS5c (rps5) from Porphyra purpurea (Red seaweed).